The primary structure comprises 253 residues: Ras-like protein family member 11A-like (253 aa).

GTP-binding positions include 43–50, 90–97, and 157–160; these read GASNVGKT, DTPCVSLQ, and NKSD. A disordered region spans residues 213-233; that stretch reads GNGEKRKGGLHLARPKSPNMQ.

It belongs to the small GTPase superfamily. Ras family.

It localises to the nucleus. The protein localises to the nucleolus. It catalyses the reaction GTP + H2O = GDP + phosphate + H(+). Regulator of rDNA transcription. This is Ras-like protein family member 11A-like from Danio rerio (Zebrafish).